Reading from the N-terminus, the 254-residue chain is Pyruvate dehydrogenase complex repressor (254 aa).

The HTH gntR-type domain occupies 9-77 (PKLSDVIEQQ…QGGGTFVQSS (69 aa)). The segment at residues 37-56 (ERELAKQFDVSRPSLREAIQ) is a DNA-binding region (H-T-H motif).

In terms of biological role, transcriptional repressor for the pyruvate dehydrogenase complex genes aceEF and lpd. This Salmonella typhi protein is Pyruvate dehydrogenase complex repressor (pdhR).